The following is a 320-amino-acid chain: Cytochrome f (320 aa).

An N-terminal signal peptide occupies residues 1-35; that stretch reads MQTRKTLSWIKEEITRSISLSLMLSIITHASLSNA. Tyrosine 36, cysteine 56, cysteine 59, and histidine 60 together coordinate heme. Residues 286–306 traverse the membrane as a helical segment; that stretch reads VQGLLFFLTSVLLAQIFLVLK.

This sequence belongs to the cytochrome f family. As to quaternary structure, the 4 large subunits of the cytochrome b6-f complex are cytochrome b6, subunit IV (17 kDa polypeptide, petD), cytochrome f and the Rieske protein, while the 4 small subunits are PetG, PetL, PetM and PetN. The complex functions as a dimer. Heme is required as a cofactor.

It is found in the plastid. The protein localises to the chloroplast thylakoid membrane. Component of the cytochrome b6-f complex, which mediates electron transfer between photosystem II (PSII) and photosystem I (PSI), cyclic electron flow around PSI, and state transitions. This is Cytochrome f from Pelargonium hortorum (Common geranium).